Reading from the N-terminus, the 4134-residue chain is DNA-dependent protein kinase catalytic subunit (4134 aa).

HEAT repeat units lie at residues 900 to 937, 1000 to 1036, and 1050 to 1085; these read VIYLDVFLPRVTDLALSASDRQTKIAACELLHSIVAYM, QDTVTFLEAILSGIVDPVDSTLRDFCGQCVREFLKWS, and ANTKSLFKRLYSLALHPSAFKRLGAALAFNSIYREF. TPR repeat units lie at residues 1265–1305 and 1722–1755; these read YNTF…HDIH and PMSSDEFPKGTLKHNNYVDCTKKFLDALELSQSP. Serine 2055 is modified (phosphoserine; by autocatalysis). The TPR 3 repeat unit spans residues 2207–2240; the sequence is DEILANRLLEFLMKNAFHQKRAVFRHNLEIIKTV. Threonine 2609 is modified (phosphothreonine; by autocatalysis). Residues 2611-2629 are compositionally biased toward polar residues; that stretch reads ASQSTNRNSSQERSLSISG. The tract at residues 2611-2631 is disordered; it reads ASQSTNRNSSQERSLSISGSV. Serine 2612 bears the Phosphoserine; by autocatalysis mark. Phosphothreonine; by autocatalysis is present on residues threonine 2638 and threonine 2647. Positions 2880–3545 constitute an FAT domain; it reads NVSTSCLASL…IYPFTISSES (666 aa). The 332-residue stretch at 3728 to 4059 folds into the PI3K/PI4K catalytic domain; the sequence is FDERIMVLES…VSYVKRKLTG (332 aa). Residues 3734-3740 form a G-loop region; the sequence is VLESLRK. A catalytic loop region spans residues 3925–3933; it reads GIGDRHLSN. The interval 3945 to 3970 is activation loop; that stretch reads GIDFGHAFGSATQFLPVPELMPFRLT. Positions 4102–4134 constitute an FATC domain; sequence DRLSEETQVRCLIDQATDPNLLGRVWEGWEPWM.

Belongs to the PI3/PI4-kinase family. As to quaternary structure, DNA-PK is a heterotrimer of PRKDC and the Ku dimer (composed of XRCC6/Ku70 and XRCC5/Ku86). Component of the core long-range non-homologous end joining (NHEJ) complex (also named DNA-PK complex) composed of PRKDC, LIG4, XRCC4, XRCC6/Ku70, XRCC5/Ku86 and NHEJ1/XLF. Additional component of the NHEJ complex includes PAXX. Following autophosphorylation, PRKDC dissociates from DNA. Post-translationally, autophosphorylated at two clusters, the T2609 cluster and the S2056 cluster. Autophosphorylated on Ser-2055, Thr-2609, Thr-2638 and Thr-2647. Ser-2055 and Thr-2609 are DNA damage-inducible phosphorylation sites (inducible with ionizing radiation, IR) dephosphorylated by PPP5C. Autophosphorylation induces a conformational change that leads to remodeling of the DNA-PK complex, requisite for efficient end processing and DNA repair. Autophosphorylation in trans within DNA-PK complexes loaded on DNA ends leads to the dissociation of PRKDC from DNA and the transition into the short-range NHEJ complex. Autophosphorylation of the T2609 cluster is required for hematopoietic development and protein synthesis in erythrocytes precursors.

It localises to the nucleus. The protein localises to the nucleolus. It catalyses the reaction L-seryl-[protein] + ATP = O-phospho-L-seryl-[protein] + ADP + H(+). The catalysed reaction is L-threonyl-[protein] + ATP = O-phospho-L-threonyl-[protein] + ADP + H(+). In terms of biological role, serine/threonine-protein kinase that acts as a molecular sensor for DNA damage. Involved in DNA nonhomologous end joining (NHEJ) required for double-strand break (DSB) repair and V(D)J recombination. Must be bound to DNA to express its catalytic properties. Promotes processing of hairpin DNA structures in V(D)J recombination by activation of the hairpin endonuclease artemis (DCLRE1C). Recruited by XRCC5 and XRCC6 to DNA ends and is required to (1) protect and align broken ends of DNA, thereby preventing their degradation, (2) and sequester the DSB for repair by NHEJ. Acts as a scaffold protein to aid the localization of DNA repair proteins to the site of damage. The assembly of the DNA-PK complex at DNA ends is also required for the NHEJ ligation step. Found at the ends of chromosomes, suggesting a further role in the maintenance of telomeric stability and the prevention of chromosomal end fusion. As part of the DNA-PK complex, involved in the early steps of ribosome assembly by promoting the processing of precursor rRNA into mature 18S rRNA in the small-subunit processome. Recognizes the substrate consensus sequence [ST]-Q. Phosphorylates 'Ser-139' of histone variant H2AX, thereby regulating DNA damage response mechanism. This Gallus gallus (Chicken) protein is DNA-dependent protein kinase catalytic subunit (PRKDC).